The primary structure comprises 173 residues: Ribosome maturation factor RimM (173 aa).

The 73-residue stretch at valine 98–leucine 170 folds into the PRC barrel domain.

The protein belongs to the RimM family. As to quaternary structure, binds ribosomal protein uS19.

It localises to the cytoplasm. In terms of biological role, an accessory protein needed during the final step in the assembly of 30S ribosomal subunit, possibly for assembly of the head region. Essential for efficient processing of 16S rRNA. May be needed both before and after RbfA during the maturation of 16S rRNA. It has affinity for free ribosomal 30S subunits but not for 70S ribosomes. The protein is Ribosome maturation factor RimM of Parabacteroides distasonis (strain ATCC 8503 / DSM 20701 / CIP 104284 / JCM 5825 / NCTC 11152).